The chain runs to 152 residues: Protein Smg homolog (152 aa).

Belongs to the Smg family.

The polypeptide is Protein Smg homolog (Bordetella avium (strain 197N)).